A 491-amino-acid chain; its full sequence is Katanin p60 ATPase-containing subunit A1 (491 aa).

The tract at residues 1 to 29 (MSLQMIVENVKLAREYALLGNYDSAMVYY) is interaction with KATNB1. The segment at 1-75 (MSLQMIVENV…VKDIMKTLES (75 aa)) is interaction with dynein and NDEL1. Positions 1–185 (MSLQMIVENV…EPEANKFDGT (185 aa)) are interaction with microtubules; sufficient for microtubule severing activity. The residue at position 42 (Ser-42) is a Phosphoserine; by DYRK2. The segment at 101 to 182 (PVPVERRPLP…AVTEPEANKF (82 aa)) is disordered. Positions 145–169 (HNDRGKAVRSREKKEQSKGREEKNK) are enriched in basic and acidic residues. 249-256 (GPPGTGKT) contacts ATP.

This sequence belongs to the AAA ATPase family. Katanin p60 subunit A1 subfamily. Can homooligomerize into hexameric rings, which may be promoted by interaction with microtubules. Interacts with KATNB1, which may serve as a targeting subunit. Interacts with ASPM; the katanin complex formation KATNA1:KATNB1 is required for the association of ASPM. Interacts with dynein and NDEL1. Associates with the E3 ligase complex containing DYRK2, EDD/UBR5, DDB1 and DCAF1 proteins (EDVP complex). Interacts with KLHL42 (via the kelch domains). Interacts with CUL3; the interaction is enhanced by KLHL42. Interacts with KATNB1 and KATNBL1. Interacts with CAMSAP2 and CAMSAP3; leading to regulate the length of CAMSAP-decorated microtubule stretches. In terms of processing, phosphorylation by DYRK2 triggers ubiquitination and subsequent degradation. Post-translationally, ubiquitinated by the BCR(KLHL42) E3 ubiquitin ligase complex, leading to its proteasomal degradation. Ubiquitinated by the EDVP E3 ligase complex and subsequently targeted for proteasomal degradation.

Its subcellular location is the cytoplasm. It is found in the midbody. The protein resides in the cytoskeleton. It localises to the microtubule organizing center. The protein localises to the centrosome. Its subcellular location is the spindle pole. It is found in the spindle. It carries out the reaction n ATP + n H2O + a microtubule = n ADP + n phosphate + (n+1) alpha/beta tubulin heterodimers.. ATPase activity is stimulated by microtubules, which promote homooligomerization. ATP-dependent microtubule severing is stimulated by interaction with KATNB1. Functionally, catalytic subunit of a complex which severs microtubules in an ATP-dependent manner. Microtubule severing may promote rapid reorganization of cellular microtubule arrays and the release of microtubules from the centrosome following nucleation. Microtubule release from the mitotic spindle poles may allow depolymerization of the microtubule end proximal to the spindle pole, leading to poleward microtubule flux and poleward motion of chromosome. The function in regulating microtubule dynamics at spindle poles seems to depend on the association of the katanin KATNA1:KATNB1 complex with ASPM which recruits it to microtubules. Reversely KATNA1:KATNB1 can enhance ASPM blocking activity on microtubule minus-end growth. Microtubule release within the cell body of neurons may be required for their transport into neuronal processes by microtubule-dependent motor proteins. This transport is required for axonal growth. This Mus musculus (Mouse) protein is Katanin p60 ATPase-containing subunit A1 (Katna1).